A 339-amino-acid chain; its full sequence is Serpentine receptor class alpha-22 (339 aa).

The next 6 helical transmembrane spans lie at Ile-33–Leu-53, Val-110–Leu-130, Phe-150–Ala-170, Val-199–Val-219, Ile-250–Leu-270, and Ile-284–Phe-304.

It belongs to the nematode receptor-like protein sra family.

Its subcellular location is the membrane. The protein is Serpentine receptor class alpha-22 (sra-22) of Caenorhabditis elegans.